We begin with the raw amino-acid sequence, 207 residues long: dTTP/UTP pyrophosphatase (207 aa).

The active-site Proton acceptor is Asp-79.

It belongs to the Maf family. YhdE subfamily. A divalent metal cation is required as a cofactor.

Its subcellular location is the cytoplasm. The enzyme catalyses dTTP + H2O = dTMP + diphosphate + H(+). The catalysed reaction is UTP + H2O = UMP + diphosphate + H(+). Its function is as follows. Nucleoside triphosphate pyrophosphatase that hydrolyzes dTTP and UTP. May have a dual role in cell division arrest and in preventing the incorporation of modified nucleotides into cellular nucleic acids. This chain is dTTP/UTP pyrophosphatase, found in Rhodopseudomonas palustris (strain BisB5).